Reading from the N-terminus, the 92-residue chain is Large ribosomal subunit protein bL34m (92 aa).

The N-terminal 46 residues, 1–46 (MAFLARCFGCQACRSVALLSGRYLQSRVWMGLPDSWPLLSLQQARG), are a transit peptide targeting the mitochondrion. Position 71 is a phosphoserine (Ser-71).

It belongs to the bacterial ribosomal protein bL34 family. Component of the mitochondrial ribosome large subunit (39S) which comprises a 16S rRNA and about 50 distinct proteins.

The protein localises to the mitochondrion. The chain is Large ribosomal subunit protein bL34m (Mrpl34) from Mus musculus (Mouse).